The chain runs to 112 residues: UPF0342 protein SGO_1370 (112 aa).

This sequence belongs to the UPF0342 family.

In Streptococcus gordonii (strain Challis / ATCC 35105 / BCRC 15272 / CH1 / DL1 / V288), this protein is UPF0342 protein SGO_1370.